Consider the following 830-residue polypeptide: Interleukin-4 receptor subunit alpha (830 aa).

Residues 1–32 form the signal peptide; that stretch reads MGWLCPGLTFSVSCLILVWAAGSGVTCVSPGG. At 33–240 the chain is on the extracellular side; it reads VRVLEWPICL…NYYEEPLEQR (208 aa). An intrachain disulfide couples Cys41 to Cys51. N-linked (GlcNAc...) asparagine glycans are attached at residues Asn60 and Asn78. Cys82 and Cys94 form a disulfide bridge. 3 N-linked (GlcNAc...) asparagine glycosylation sites follow: Asn120, Asn142, and Asn170. The 100-residue stretch at 133–232 folds into the Fibronectin type-III domain; it reads APRNLMVHAN…WSPSVKWLNY (100 aa). At Ser172 the chain carries Phosphoserine. Asn184 and Asn217 each carry an N-linked (GlcNAc...) asparagine glycan. A WSXWS motif motif is present at residues 220–224; the sequence is WSEWS. The helical transmembrane segment at 241-264 threads the bilayer; it reads LPLGVSISCVVILIICLSCYFGII. Topologically, residues 265–830 are cytoplasmic; sequence RIKKEWWDQI…SPGPACMDTS (566 aa). Residues 270-278 carry the Box 1 motif motif; sequence WWDQIPNPA. A compositionally biased stretch (acidic residues) spans 378–387; the sequence is ENEEEEEEED. Disordered stretches follow at residues 378–403 and 450–488; these read ENEE…GSFQ and MPWA…SLAS. A required for IRS1 activation and IL4-induced cell growth region spans residues 444–564; that stretch reads ENASAPMPWA…ETWEQILRQS (121 aa). Residue Tyr504 is modified to Phosphotyrosine. 2 disordered regions span residues 508 to 610 and 623 to 696; these read STFL…EAGY and CPGT…DGQK. Residues 518-534 are compositionally biased toward acidic residues; sequence GELDSDPELAEALEEVE. Pro residues predominate over residues 538–551; sequence PAAPQPSEPPPTLQ. The required for IL4-induced gene expression stretch occupies residues 564–662; the sequence is SVLQRRAAPA…VPTPLFTFGL (99 aa). Over residues 570–582 the composition is skewed to low complexity; the sequence is AAPAPASGPSSSG. Residues Tyr583 and Tyr610 each carry the phosphotyrosine modification. Positions 623-635 are enriched in polar residues; the sequence is CPGTSGLEPSSGE. Tyr638 carries the phosphotyrosine modification. 2 stretches are compositionally biased toward pro residues: residues 646–655 and 665–676; these read PGCPETPVPT and EPPPSPQNPPFP. An ITIM motif motif is present at residues 716 to 721; sequence IVYSAL. Residues 811-830 are disordered; the sequence is SQTPTAVAMLSPGPACMDTS.

The protein belongs to the type I cytokine receptor family. Type 4 subfamily. The functional IL4 receptor is formed by initial binding of IL4 to IL4R. Subsequent recruitment to the complex of the common gamma chain, in immune cells, creates a type I receptor and, in non-immune cells, of IL13RA1 forms a type II receptor. IL4R can also interact with the IL13/IL13RA1 complex to form a similar type II receptor. Interacts with PIK3C3. Interacts with the SH2-containing phosphatases, PTPN6/SHIP1, PTPN11/SHIP2 and INPP5D/SHIP. Interacts with JAK1 through a Box 1-containing region; inhibited by SOCS5. Interacts with SOCS5; inhibits IL4 signaling. Interacts with JAK3. Interacts with CLM1. Interacts with IL13RA2. In terms of processing, on IL4 binding, phosphorylated on C-terminal tyrosine residues.

The protein resides in the membrane. In terms of biological role, receptor for both interleukin 4 and interleukin 13. Couples to the JAK1/2/3-STAT6 pathway. The IL4 response is involved in promoting Th2 differentiation. The IL4/IL13 responses are involved in regulating IgE production and, chemokine and mucus production at sites of allergic inflammation. In certain cell types, can signal through activation of insulin receptor substrates, IRS1/IRS2. The chain is Interleukin-4 receptor subunit alpha (IL4R) from Sus scrofa (Pig).